We begin with the raw amino-acid sequence, 249 residues long: tRNA (guanine-N(1)-)-methyltransferase (249 aa).

Residues Gly-113 and 132–137 each bind S-adenosyl-L-methionine; that span reads VGDFVV.

It belongs to the RNA methyltransferase TrmD family. In terms of assembly, homodimer.

Its subcellular location is the cytoplasm. The catalysed reaction is guanosine(37) in tRNA + S-adenosyl-L-methionine = N(1)-methylguanosine(37) in tRNA + S-adenosyl-L-homocysteine + H(+). Its function is as follows. Specifically methylates guanosine-37 in various tRNAs. The polypeptide is tRNA (guanine-N(1)-)-methyltransferase (Desulforudis audaxviator (strain MP104C)).